Consider the following 112-residue polypeptide: UPF0212 protein Mhun_0078 (112 aa).

Belongs to the UPF0212 family.

The polypeptide is UPF0212 protein Mhun_0078 (Methanospirillum hungatei JF-1 (strain ATCC 27890 / DSM 864 / NBRC 100397 / JF-1)).